The primary structure comprises 756 residues: MATLTDIGVAATINILTAFAFFIAFAILRLQPVNDRVYFPKWYLKGLRSSPIKTGGFASKFVNLDFRSYIRFLNWMPQALRMPEPELIDHAGLDSVVYLRIYLLGLKIFFPIACIAFTVMVPVNWTNSTLDQLKNLTFSDIDKLSISNIPTGSSRFWVHLCMAYVITFWTCFVLQREYKHIASMRLQFLASEHRRPDQFTVLVRNIPPDPDESVSELVEHFFKVNHPDYYLTYQAVYNANKLSELVQKRMKLQNWLDYYQNKHSRNPSKRPLIKIGFLGCWGEEVDAIDHYIEKIEGLTRKISEEKETVMSSTKSLVPAAFVSFKKRWGAVVCSQTQQSRNPTEWLTEWAPEPRDIYWDNLALPYVQLTIRRLVIAVAFFFLTFFFMIPIAFVQTLANIEGIEKAVPFLKPLIEVKTVKSFIQGFLPGIALKIFLIVLPSILMLMSKFEGFISKSSLERRCASRYYMFQFINVFLCSIIAGTALQQLDSFLNQSATEIPKTIGVSIPMKATFFITYIMVDGWAGVAGEILRLKPLIIYHLKNFFLVKTEKDREEAMDPGTIGFNTGEPQIQLYFILGLVYAAVSPILLPFILVFFALAYVVYRHQIINVYNQEYESAAAFWPDVHRRVVIALIVSQLLLMGLLSTKKAARSTPLLFILPVLTIGFHKFCQGRYQPIFVTYPLQDAMVKDTLERMREPNLNLKTFLQNAYAHPVFKAADNLANEMVVEEPAPDKTPDLVATKRGSRRFNSGSAETFT.

The next 10 membrane-spanning stretches (helical) occupy residues 7-27 (IGVA…AFAI), 101-121 (IYLL…TVMV), 154-174 (SRFW…CFVL), 373-393 (LVIA…IAFV), 425-445 (FLPG…LMLM), 465-485 (YYMF…TALQ), 510-530 (ATFF…GEIL), 574-594 (FILG…ILVF), 628-648 (VVIA…TKKA), and 651-671 (STPL…FCQG). The segment at 731–756 (PDKTPDLVATKRGSRRFNSGSAETFT) is disordered. Residues 746–756 (RFNSGSAETFT) show a composition bias toward polar residues.

Belongs to the CSC1 (TC 1.A.17) family.

The protein localises to the membrane. Functionally, acts as an osmosensitive calcium-permeable cation channel. This is Hyperosmolality-gated Ca2+ permeable channel 1.5 from Arabidopsis thaliana (Mouse-ear cress).